The primary structure comprises 81 residues: Sulfur carrier protein TusA (81 aa).

The Cysteine persulfide intermediate role is filled by cysteine 20.

This sequence belongs to the sulfur carrier protein TusA family.

The protein resides in the cytoplasm. Its function is as follows. Sulfur carrier protein which probably makes part of a sulfur-relay system. This chain is Sulfur carrier protein TusA, found in Colwellia psychrerythraea (strain 34H / ATCC BAA-681) (Vibrio psychroerythus).